Here is a 119-residue protein sequence, read N- to C-terminus: HTH-type transcriptional regulator SarX (119 aa).

Positions 55 to 78 (LKTAMDELDLSRTKLLVSIRRLIE) form a DNA-binding region, H-T-H motif.

The protein belongs to the SarA family.

The protein resides in the cytoplasm. Its function is as follows. Involved in the regulation of virulence genes. Acts as a repressor of the agr locus and consequently targets genes regulated by the agr system such as sspA, hla and hlb. Binds directly to the agr promoter region. This chain is HTH-type transcriptional regulator SarX (sarX), found in Staphylococcus aureus (strain USA300).